Reading from the N-terminus, the 422-residue chain is Gamma-glutamyl phosphate reductase (422 aa).

It belongs to the gamma-glutamyl phosphate reductase family.

The protein resides in the cytoplasm. It carries out the reaction L-glutamate 5-semialdehyde + phosphate + NADP(+) = L-glutamyl 5-phosphate + NADPH + H(+). It participates in amino-acid biosynthesis; L-proline biosynthesis; L-glutamate 5-semialdehyde from L-glutamate: step 2/2. Functionally, catalyzes the NADPH-dependent reduction of L-glutamate 5-phosphate into L-glutamate 5-semialdehyde and phosphate. The product spontaneously undergoes cyclization to form 1-pyrroline-5-carboxylate. The protein is Gamma-glutamyl phosphate reductase of Nitrosomonas eutropha (strain DSM 101675 / C91 / Nm57).